Here is a 259-residue protein sequence, read N- to C-terminus: Small ribosomal subunit protein uS2 (259 aa).

The tract at residues 234–259 (VAEDSEEVSTVDADAITAEDFETEEV) is disordered. A compositionally biased stretch (acidic residues) spans 250 to 259 (TAEDFETEEV).

Belongs to the universal ribosomal protein uS2 family.

The chain is Small ribosomal subunit protein uS2 from Sulfurimonas denitrificans (strain ATCC 33889 / DSM 1251) (Thiomicrospira denitrificans (strain ATCC 33889 / DSM 1251)).